A 500-amino-acid polypeptide reads, in one-letter code: Glycerol kinase (500 aa).

Position 16 (Thr-16) interacts with ADP. The ATP site is built by Thr-16 and Thr-17. Thr-16 lines the sn-glycerol 3-phosphate pocket. Position 20 (Arg-20) interacts with ADP. Arg-86, Glu-87, Tyr-138, and Asp-243 together coordinate sn-glycerol 3-phosphate. Arg-86, Glu-87, Tyr-138, Asp-243, and Gln-244 together coordinate glycerol. The ADP site is built by Thr-265 and Gly-313. The ATP site is built by Thr-265, Gly-313, Gln-317, and Gly-414. Residues Gly-414 and Asn-418 each contribute to the ADP site.

It belongs to the FGGY kinase family.

The enzyme catalyses glycerol + ATP = sn-glycerol 3-phosphate + ADP + H(+). The protein operates within polyol metabolism; glycerol degradation via glycerol kinase pathway; sn-glycerol 3-phosphate from glycerol: step 1/1. Its activity is regulated as follows. Inhibited by fructose 1,6-bisphosphate (FBP). Key enzyme in the regulation of glycerol uptake and metabolism. Catalyzes the phosphorylation of glycerol to yield sn-glycerol 3-phosphate. The polypeptide is Glycerol kinase (Nostoc sp. (strain PCC 7120 / SAG 25.82 / UTEX 2576)).